We begin with the raw amino-acid sequence, 238 residues long: LexA repressor (238 aa).

Residues 26–46 constitute a DNA-binding region (H-T-H motif); that stretch reads FDEMKDALDLASKSGIHRLIT. Active-site for autocatalytic cleavage activity residues include Ser158 and Lys196.

This sequence belongs to the peptidase S24 family. Homodimer.

It catalyses the reaction Hydrolysis of Ala-|-Gly bond in repressor LexA.. Represses a number of genes involved in the response to DNA damage (SOS response), including recA and lexA. In the presence of single-stranded DNA, RecA interacts with LexA causing an autocatalytic cleavage which disrupts the DNA-binding part of LexA, leading to derepression of the SOS regulon and eventually DNA repair. The polypeptide is LexA repressor (Rhizobium meliloti (strain 1021) (Ensifer meliloti)).